The following is a 366-amino-acid chain: MNSLANNGKLYLSLKKLNFPKEWSYPVNPNTSYIIDTFKEAVKCGIFLESNKKHFEYSYSILTVIGWFFPRYNYEQLMIASSVMQWIFVLDDFLERDHIDDEKQQYCVNKCEDILIQGRKSEYISNIADADLAPLDKYTLLLRDRLSKSTKDRVETFNIFIHYLREWFFSVIPLKKSKGESKSDSVHYDVYTFIRTVNVGLYFVIAINNVAVDLKIDGSFWMNPIWSRMTRNASRLFTIVNDCVSYAKEIDQECAGENCLYILQIKSNLPLQTVYNHLVDEFDQIVAKVQKDEILLLESFNYLPNEKIDGIKYLILSLKELLVGNYKWSLVSPRYIHKDSPFIETSRSDSSTIPYETILTPDIFWI.

Positions 91–96 (DDFLER) match the DDxx(x)D/E motif motif. An NDxxSxxxD/E motif motif is present at residues 241–249 (NDCVSYAKE).

The protein belongs to the terpene synthase family.

It carries out the reaction (2E,6E)-farnesyl diphosphate = (1S,2S,4R)-beta-elemene + diphosphate. In terms of biological role, terpene synthase that converts its substrate farnesyl diphosphate (FPP) into the sesquiterpenes bicycloelemene, beta-elemene and 2 yet unidentified sesquiterpenes. In Dictyostelium purpureum (Slime mold), this protein is Terpene synthase 4.